The primary structure comprises 303 residues: N-acetyl-D-glucosamine kinase (303 aa).

ATP-binding positions include G4 to K11 and G133 to F140. Residues H157, C177, C179, and C184 each coordinate Zn(2+).

It belongs to the ROK (NagC/XylR) family. NagK subfamily.

It carries out the reaction N-acetyl-D-glucosamine + ATP = N-acetyl-D-glucosamine 6-phosphate + ADP + H(+). It functions in the pathway cell wall biogenesis; peptidoglycan recycling. Its function is as follows. Catalyzes the phosphorylation of N-acetyl-D-glucosamine (GlcNAc) derived from cell-wall degradation, yielding GlcNAc-6-P. The polypeptide is N-acetyl-D-glucosamine kinase (Escherichia coli O6:H1 (strain CFT073 / ATCC 700928 / UPEC)).